Consider the following 316-residue polypeptide: MQILLANPRGFCAGVDRAISIVENALAIYGAPIYVRHEVVHNRYVVDSLRKRGAIFIEQISEVPDGAILIFSAHGVSQAVRNEAKSRDLTVFDATCPLVTKVHMEVARASRRGEESILIGHAGHPEVEGTMGQYSNPEGGMYLVESPEDVWTLNVKNEGKLSFMTQTTLSVDDTSDVIDALRKRFPKIVGPRKDDICYATTNRQEAVRALAEQADVVLVVGSKNSSNSNRLAELAQRMGRTAFLIDDAADIQEAWVKEAACVGVTAGASAPDILVQNVIARLREFGGGEAVTLEGREENIVFEVPKELRVDVREVE.

Cysteine 12 lines the [4Fe-4S] cluster pocket. (2E)-4-hydroxy-3-methylbut-2-enyl diphosphate-binding residues include histidine 41 and histidine 74. Dimethylallyl diphosphate is bound by residues histidine 41 and histidine 74. Positions 41 and 74 each coordinate isopentenyl diphosphate. Position 96 (cysteine 96) interacts with [4Fe-4S] cluster. Residue histidine 124 coordinates (2E)-4-hydroxy-3-methylbut-2-enyl diphosphate. Histidine 124 serves as a coordination point for dimethylallyl diphosphate. Residue histidine 124 coordinates isopentenyl diphosphate. Catalysis depends on glutamate 126, which acts as the Proton donor. Threonine 167 serves as a coordination point for (2E)-4-hydroxy-3-methylbut-2-enyl diphosphate. A [4Fe-4S] cluster-binding site is contributed by cysteine 197. (2E)-4-hydroxy-3-methylbut-2-enyl diphosphate-binding residues include serine 225, serine 226, asparagine 227, and serine 269. Residues serine 225, serine 226, asparagine 227, and serine 269 each contribute to the dimethylallyl diphosphate site. The isopentenyl diphosphate site is built by serine 225, serine 226, asparagine 227, and serine 269.

The protein belongs to the IspH family. In terms of assembly, homodimer. It depends on [4Fe-4S] cluster as a cofactor.

The enzyme catalyses isopentenyl diphosphate + 2 oxidized [2Fe-2S]-[ferredoxin] + H2O = (2E)-4-hydroxy-3-methylbut-2-enyl diphosphate + 2 reduced [2Fe-2S]-[ferredoxin] + 2 H(+). The catalysed reaction is dimethylallyl diphosphate + 2 oxidized [2Fe-2S]-[ferredoxin] + H2O = (2E)-4-hydroxy-3-methylbut-2-enyl diphosphate + 2 reduced [2Fe-2S]-[ferredoxin] + 2 H(+). It participates in isoprenoid biosynthesis; dimethylallyl diphosphate biosynthesis; dimethylallyl diphosphate from (2E)-4-hydroxy-3-methylbutenyl diphosphate: step 1/1. The protein operates within isoprenoid biosynthesis; isopentenyl diphosphate biosynthesis via DXP pathway; isopentenyl diphosphate from 1-deoxy-D-xylulose 5-phosphate: step 6/6. Functionally, catalyzes the conversion of 1-hydroxy-2-methyl-2-(E)-butenyl 4-diphosphate (HMBPP) into a mixture of isopentenyl diphosphate (IPP) and dimethylallyl diphosphate (DMAPP). Acts in the terminal step of the DOXP/MEP pathway for isoprenoid precursor biosynthesis. The polypeptide is 4-hydroxy-3-methylbut-2-enyl diphosphate reductase (Salmonella paratyphi B (strain ATCC BAA-1250 / SPB7)).